A 223-amino-acid chain; its full sequence is Thymine-DNA glycosylase (223 aa).

[4Fe-4S] cluster contacts are provided by C201, C208, C211, and C217.

Belongs to the Nth/MutY family. The cofactor is [4Fe-4S] cluster.

It carries out the reaction Hydrolyzes mismatched double-stranded DNA and polynucleotides, releasing free thymine.. Its activity is regulated as follows. Thymine cleavage is completely inhibited by Ni(2+), Co(2+), Zn(2+), Cu(2+) and Mn(2+). Activity is not affected by Mg(2+) and Ca(2+). Its function is as follows. DNA glycosylase that excises thymine from T/G mismatches. Also has a weak DNA glycosylase activity on uracil paired with various bases. This chain is Thymine-DNA glycosylase, found in Aeropyrum pernix (strain ATCC 700893 / DSM 11879 / JCM 9820 / NBRC 100138 / K1).